The chain runs to 554 residues: uncharacterized protein (554 aa).

5 helical membrane passes run 13–31, 36–58, 73–92, 99–121, and 161–183; these read SVAHIVFLYAFVVAAGVYL, IFGVSLGVTFVLFAGILMGHFGF, LILFVFCIGLQVGPSFFSSF, LNLLAVGIVVLNIAVALGLYYLW, and IALGYACAYPLGVVGIIGSIIAI. 2 RCK C-terminal domains span residues 199 to 281 and 282 to 366; these read KTQS…FIGK and EVEL…VLGN. A run of 4 helical transmembrane segments spans residues 376–395, 405–422, 442–464, and 468–490; these read IVTIFVGIFLGILLGSLPIA, LGLAGGPLVVAILIGRFG, IGIVLFLASVGIDAGANFVQTVV, and GLLYVGCGFLITVIPLLIIGAIA.

This sequence belongs to the AAE transporter (TC 2.A.81) family.

The protein localises to the cell membrane. This is an uncharacterized protein from Bacteroides thetaiotaomicron (strain ATCC 29148 / DSM 2079 / JCM 5827 / CCUG 10774 / NCTC 10582 / VPI-5482 / E50).